A 133-amino-acid polypeptide reads, in one-letter code: Male-specific protein scotti (133 aa).

The interval 11-57 (FPSNGLGNNNNDPNQQRGERPRQPHPDLGWILDAPNEPPRNRNPLLY) is disordered. The segment covering 14 to 24 (NGLGNNNNDPN) has biased composition (low complexity). N-linked (GlcNAc...) asparagine glycosylation occurs at N83.

Belongs to the male-specific scotti family.

Functionally, post-meiotically transcribed gene that has a role in late spermiogenesis; required for actin cone progression during spermatid individualization. This is Male-specific protein scotti from Drosophila persimilis (Fruit fly).